Consider the following 69-residue polypeptide: MRQNTMTIIFIVFIVTFASLTIYGAEASEANFLERRADCLAHLKLCKKNKDCCSKKCSRRGTNPEQRCR.

An N-terminal signal peptide occupies residues 1–27 (MRQNTMTIIFIVFIVTFASLTIYGAEA). The propeptide occupies 28–36 (SEANFLERR). 3 disulfides stabilise this stretch: Cys-39-Cys-53, Cys-46-Cys-57, and Cys-52-Cys-68. An essential for stimulation of [3H]ryanodine binding to RYR1 region spans residues 59 to 60 (RR).

This sequence belongs to the scorpion calcin family. As to expression, expressed by the venom gland.

It is found in the secreted. This toxin stabilizes ryanodine receptor 1 (RyR1) opening in a long-lasting subconductance state (55% of the full conductance state). Furthermore, it triggers calcium release from sarcoplasmic vesicles (45.3 nM are enough to induce a sharp release, and 50% of the total calcium is released after toxin (100 nM) addition) probably by acting as a cell-penetrating peptide (CPP). In addition, it has been shown to dose-dependently stimulate ryanodine binding to RyR1 (EC(50)=17.4 nM). It also augments the bell-shaped calcium-[3H]ryanodine binding curve that is maximal at about 10 uM calcium concentration. It binds a different site as ryanodine. It acts synergistically with caffeine. In vivo, intracerebroventricular injection into mice induces neurotoxic symptoms, followed by death. The chain is Intrepicalcin from Thorellius intrepidus (Scorpion).